Reading from the N-terminus, the 135-residue chain is ATP synthase epsilon chain (135 aa).

This sequence belongs to the ATPase epsilon chain family. F-type ATPases have 2 components, CF(1) - the catalytic core - and CF(0) - the membrane proton channel. CF(1) has five subunits: alpha(3), beta(3), gamma(1), delta(1), epsilon(1). CF(0) has three main subunits: a, b and c.

It localises to the cell inner membrane. Its function is as follows. Produces ATP from ADP in the presence of a proton gradient across the membrane. This chain is ATP synthase epsilon chain, found in Rhodopseudomonas palustris (strain HaA2).